The sequence spans 257 residues: Gamma-secretase subunit APH-1B (257 aa).

Helical transmembrane passes span 5 to 25 (VFFGCAFIAFGPALALYVFTI), 32 to 52 (VIFLIAGAFFWLVSLLLSSVF), 66 to 86 (PVQNYLLIFGVLLSVCIQELF), 115 to 135 (LLAYVSGLGFGIMSGVFSFVN), 160 to 180 (AFMTLVVIMLHVFWGVVFFDG), 186 to 206 (WYTLLTVLLTHLVVSTQTFLS), and 213 to 233 (LVTAYIIMVLMGIWAFYVAGG).

The protein belongs to the APH-1 family. As to quaternary structure, probable component of the gamma-secretase complex, a complex composed of a presenilin homodimer (PSEN1 or PSEN2), nicastrin (NCSTN), APH1 (APH1A or APH1B) and PEN2. Such minimal complex is sufficient for secretase activity, although other components may exist. Interacts with PSEN1 and PSEN2.

It localises to the membrane. Its function is as follows. Probable subunit of the gamma-secretase complex, an endoprotease complex that catalyzes the intramembrane cleavage of integral proteins such as Notch receptors and APP (amyloid-beta precursor protein). It probably represents a stabilizing cofactor for the presenilin homodimer that promotes the formation of a stable complex. Probably present in a minority of gamma-secretase complexes compared to APH1A. The protein is Gamma-secretase subunit APH-1B (Aph1b) of Mus musculus (Mouse).